Consider the following 170-residue polypeptide: Large ribosomal subunit protein uL10 (170 aa).

The protein belongs to the universal ribosomal protein uL10 family. Part of the ribosomal stalk of the 50S ribosomal subunit. The N-terminus interacts with L11 and the large rRNA to form the base of the stalk. The C-terminus forms an elongated spine to which L12 dimers bind in a sequential fashion forming a multimeric L10(L12)X complex.

Functionally, forms part of the ribosomal stalk, playing a central role in the interaction of the ribosome with GTP-bound translation factors. The protein is Large ribosomal subunit protein uL10 of Chlamydia abortus (strain DSM 27085 / S26/3) (Chlamydophila abortus).